The primary structure comprises 209 residues: Large ribosomal subunit protein uL3 (209 aa).

Glutamine 150 bears the N5-methylglutamine mark.

It belongs to the universal ribosomal protein uL3 family. In terms of assembly, part of the 50S ribosomal subunit. Forms a cluster with proteins L14 and L19. Post-translationally, methylated by PrmB.

Functionally, one of the primary rRNA binding proteins, it binds directly near the 3'-end of the 23S rRNA, where it nucleates assembly of the 50S subunit. The sequence is that of Large ribosomal subunit protein uL3 from Salmonella arizonae (strain ATCC BAA-731 / CDC346-86 / RSK2980).